Consider the following 101-residue polypeptide: uncharacterized protein (101 aa).

The chain crosses the membrane as a helical span at residues 72–94 (ILCPSFLNYSFINIYCFGPYTMV).

The protein localises to the membrane. This is an uncharacterized protein from Schizosaccharomyces pombe (strain 972 / ATCC 24843) (Fission yeast).